Here is a 221-residue protein sequence, read N- to C-terminus: Oligoribonuclease (221 aa).

Residues 21–186 (LVWVDLEMTG…ADIVESIREL (166 aa)) form the Exonuclease domain. Residue Y143 is part of the active site.

This sequence belongs to the oligoribonuclease family.

It is found in the cytoplasm. Its function is as follows. 3'-to-5' exoribonuclease specific for small oligoribonucleotides. The polypeptide is Oligoribonuclease (Corynebacterium efficiens (strain DSM 44549 / YS-314 / AJ 12310 / JCM 11189 / NBRC 100395)).